The sequence spans 1246 residues: Myosin-1 (1246 aa).

The tract at residues 1 to 41 (MGHSRRPVGGEKKSRGFGRSKAVADVGDGRQTGGKPQVKKA) is disordered. The region spanning 51-730 (IGVSDLTLLS…TLFALEAMRD (680 aa)) is the Myosin motor domain. Residue 144–151 (GESGAGKT) coordinates ATP. Phosphoserine is present on Ser-372. Residues 419 to 501 (SIGILDIYGF…PGVFAALNDA (83 aa)) form an actin-binding region. IQ domains lie at 734 to 754 (HNMA…RIEC) and 755 to 780 (AIRI…QGHK). One can recognise a TH1 domain in the interval 788–976 (RRRMSLLGSR…TIHTSAGEPP (189 aa)). Residues 956 to 970 (GSSNVDTYKSSTIHT) are compositionally biased toward polar residues. Disordered regions lie at residues 956–1080 (GSSN…PKKP) and 1127–1246 (WTPQ…DDEW). Pro residues-rich tracts occupy residues 1033–1045 (APQP…PVPQ) and 1065–1078 (APPP…PAPK). Positions 1077–1138 (PKKPMAKVLY…PQAYLEEQKA (62 aa)) constitute an SH3 domain. Composition is skewed to low complexity over residues 1151–1166 (TPAT…AKAK) and 1214–1228 (NSAS…LAEA). A compositionally biased stretch (basic and acidic residues) spans 1229–1240 (LRQRQEAMHGKQ).

The protein belongs to the TRAFAC class myosin-kinesin ATPase superfamily. Myosin family. Post-translationally, phosphorylation of the TEDS site (Ser-372) is required for the polarization of the actin cytoskeleton. Phosphorylation probably activates the myosin-I ATPase activity.

Its subcellular location is the cytoplasm. The protein resides in the cytoskeleton. The protein localises to the actin patch. Its function is as follows. Type-I myosin implicated in the organization of the actin cytoskeleton. Required for proper actin cytoskeleton polarization. At the cell cortex, assembles in patch-like structures together with proteins from the actin-polymerizing machinery and promotes actin assembly. Functions as actin nucleation-promoting factor (NPF) for the Arp2/3 complex. Plays an important role in polarized growth, spore germination, hyphal morphogenesis, and septal wall formation. The chain is Myosin-1 (myoA) from Aspergillus terreus (strain NIH 2624 / FGSC A1156).